Consider the following 217-residue polypeptide: E3 ubiquitin-protein ligase znrf2 (217 aa).

Disordered regions lie at residues 1 to 27 (MGAK…SATA) and 63 to 111 (QFIS…ERST). The N-myristoyl glycine moiety is linked to residue G2. The segment covering 68–100 (RTRSVGPSARPQSGINIPNSGAYSSADSGNSTP) has biased composition (polar residues). The RING-type; atypical zinc-finger motif lies at 174–215 (CAICLEELLQGDTIARLPCLCIYHKGCIDEWFEVNRSCPEHP).

It is found in the endosome membrane. The protein localises to the lysosome membrane. The protein resides in the presynaptic cell membrane. The enzyme catalyses S-ubiquitinyl-[E2 ubiquitin-conjugating enzyme]-L-cysteine + [acceptor protein]-L-lysine = [E2 ubiquitin-conjugating enzyme]-L-cysteine + N(6)-ubiquitinyl-[acceptor protein]-L-lysine.. It participates in protein modification; protein ubiquitination. Its function is as follows. May play a role in the establishment and maintenance of neuronal transmission and plasticity via its ubiquitin ligase activity. E3 ubiquitin ligases accept ubiquitin from an E2 ubiquitin-conjugating enzyme in the form of a thioester and then directly transfer the ubiquitin to targeted substrates. This Danio rerio (Zebrafish) protein is E3 ubiquitin-protein ligase znrf2 (znrf2).